The sequence spans 168 residues: Shikimate kinase (168 aa).

Position 11 to 16 (11 to 16 (GAGKTT)) interacts with ATP. T15 contributes to the Mg(2+) binding site. D33, R57, and G78 together coordinate substrate. R118 lines the ATP pocket. R136 is a binding site for substrate. An ATP-binding site is contributed by R153.

Belongs to the shikimate kinase family. Monomer. The cofactor is Mg(2+).

The protein resides in the cytoplasm. The enzyme catalyses shikimate + ATP = 3-phosphoshikimate + ADP + H(+). The protein operates within metabolic intermediate biosynthesis; chorismate biosynthesis; chorismate from D-erythrose 4-phosphate and phosphoenolpyruvate: step 5/7. Functionally, catalyzes the specific phosphorylation of the 3-hydroxyl group of shikimic acid using ATP as a cosubstrate. The chain is Shikimate kinase from Enterococcus faecalis (strain ATCC 700802 / V583).